The primary structure comprises 372 residues: Chaperone protein DnaJ (372 aa).

One can recognise a J domain in the interval 5–69; that stretch reads DYYEVLGLTK…QKKARYDQFG (65 aa). A CR-type zinc finger spans residues 129–211; the sequence is GKETEIEIPK…CRGEGKVQKR (83 aa). Residues Cys-142, Cys-145, Cys-159, Cys-162, Cys-185, Cys-188, Cys-199, and Cys-202 each contribute to the Zn(2+) site. CXXCXGXG motif repeat units lie at residues 142–149, 159–166, 185–192, and 199–206; these read CETCHGSG, CSTCNGAG, CTTCHGTG, and CSTCRGEG.

Belongs to the DnaJ family. Homodimer. It depends on Zn(2+) as a cofactor.

It is found in the cytoplasm. Functionally, participates actively in the response to hyperosmotic and heat shock by preventing the aggregation of stress-denatured proteins and by disaggregating proteins, also in an autonomous, DnaK-independent fashion. Unfolded proteins bind initially to DnaJ; upon interaction with the DnaJ-bound protein, DnaK hydrolyzes its bound ATP, resulting in the formation of a stable complex. GrpE releases ADP from DnaK; ATP binding to DnaK triggers the release of the substrate protein, thus completing the reaction cycle. Several rounds of ATP-dependent interactions between DnaJ, DnaK and GrpE are required for fully efficient folding. Also involved, together with DnaK and GrpE, in the DNA replication of plasmids through activation of initiation proteins. This is Chaperone protein DnaJ from Lysinibacillus sphaericus (strain C3-41).